The chain runs to 193 residues: Probable GTP-binding protein EngB (193 aa).

In terms of domain architecture, EngB-type G spans 22-193; sequence LLPEVALAGR…AAWEAIYRHL (172 aa). GTP-binding positions include 30-37, 57-61, 75-78, 142-145, and 174-176; these read GRSNVGKS, GKTQT, DVPG, TKLD, and FSS. Positions 37 and 59 each coordinate Mg(2+).

Belongs to the TRAFAC class TrmE-Era-EngA-EngB-Septin-like GTPase superfamily. EngB GTPase family. Mg(2+) is required as a cofactor.

Necessary for normal cell division and for the maintenance of normal septation. In Exiguobacterium sibiricum (strain DSM 17290 / CCUG 55495 / CIP 109462 / JCM 13490 / 255-15), this protein is Probable GTP-binding protein EngB.